The following is a 635-amino-acid chain: MINISFPDGSVKQFAQNITAFEIANAISMSLAKAAMVVEINGEFKDLSTVIEHDCKLRILTAKDYECLEIIRHDAAHLTAAAVKELFPETQVAIGPAIENGYYYDFARDKPFSRDDLATIEAKMQELVKKNEKITRELWDRDKAIEFFLSIGEHYKAKIIASIPAGEQITLYRQGNFIDLCRGPHAPSTGFVKYFKLMKVAGAYWRGNSRNEMLQRIYGTAWATKEQLDNYLFMLEEAEKRDHRKIGKELDLFHFQEEAQGMVFWHDKGWSIYNTIEQYIRKKNRKNGYIEVKTPVLVDKSLWEASGHWAKFRCDMFTLETDDKILALKPMNCPCHVQIFKQGIKSYRDLPLRMSEFGLCHRNEASGALHGLMRVRSLVQDDAHIFCAEEQITDETVRFCKLLTEVYKDFGFTDIKVKFSDRPEIRAGNDEVWDKAEHALKTAVEKVGFIYTLNPGDGAFYGPKLEFVLTDAIGRQWQCGTLQMDFVLPERLDANYIAASGEKKRPVMLHRAILGSLERFIGILIEEYAGKFPIWLAPVQVAIATITNDLNDYALEVQKTLIDNNIRTDINISPDKINYKIREFSNQKIPMIAVIGKKEQANKQVTIRKFGTTGQEILSIEQLIAMIKKENSNYL.

The 61-residue stretch at 1-61 folds into the TGS domain; sequence MINISFPDGS…EHDCKLRILT (61 aa). Positions 242-533 are catalytic; the sequence is DHRKIGKELD…LIEEYAGKFP (292 aa). Zn(2+)-binding residues include cysteine 333, histidine 384, and histidine 510.

It belongs to the class-II aminoacyl-tRNA synthetase family. In terms of assembly, homodimer. Zn(2+) is required as a cofactor.

It localises to the cytoplasm. It catalyses the reaction tRNA(Thr) + L-threonine + ATP = L-threonyl-tRNA(Thr) + AMP + diphosphate + H(+). Functionally, catalyzes the attachment of threonine to tRNA(Thr) in a two-step reaction: L-threonine is first activated by ATP to form Thr-AMP and then transferred to the acceptor end of tRNA(Thr). Also edits incorrectly charged L-seryl-tRNA(Thr). The chain is Threonine--tRNA ligase from Rickettsia typhi (strain ATCC VR-144 / Wilmington).